We begin with the raw amino-acid sequence, 154 residues long: 6,7-dimethyl-8-ribityllumazine synthase (154 aa).

Residues 22–23 (FN), 56–58 (AFE), and 80–82 (TVI) each bind 5-amino-6-(D-ribitylamino)uracil. 85-86 (AT) provides a ligand contact to (2S)-2-hydroxy-3-oxobutyl phosphate. His-88 acts as the Proton donor in catalysis. Residue Phe-113 coordinates 5-amino-6-(D-ribitylamino)uracil. Residue Arg-127 participates in (2S)-2-hydroxy-3-oxobutyl phosphate binding.

Belongs to the DMRL synthase family. As to quaternary structure, forms an icosahedral capsid composed of 60 subunits, arranged as a dodecamer of pentamers. Can interact with riboflavin synthase, forming a lumazine synthase/riboflavin synthase complex, also designated as 'heavy riboflavin synthase complex', which consists of a trimer of riboflavin synthase enclosed within the icosahedral structure composed of 60 subunits of 6,7-dimethyl-8-ribityllumazine synthase.

The catalysed reaction is (2S)-2-hydroxy-3-oxobutyl phosphate + 5-amino-6-(D-ribitylamino)uracil = 6,7-dimethyl-8-(1-D-ribityl)lumazine + phosphate + 2 H2O + H(+). It participates in cofactor biosynthesis; riboflavin biosynthesis; riboflavin from 2-hydroxy-3-oxobutyl phosphate and 5-amino-6-(D-ribitylamino)uracil: step 1/2. In terms of biological role, catalyzes the formation of 6,7-dimethyl-8-ribityllumazine by condensation of 5-amino-6-(D-ribitylamino)uracil with 3,4-dihydroxy-2-butanone 4-phosphate. This is the penultimate step in the biosynthesis of riboflavin. Is able to use the non-natural R enantiomer of 3,4-dihydroxy-2-butanone 4-phosphate as a substrate, but with less efficiency than the natural S enantiomer. Cannot use unphosphorylated 3,4-dihydroxy-2-butanone, 3,4-dihydroxy-2-butanone 3-phosphate or diacetyl as substrates. The sequence is that of 6,7-dimethyl-8-ribityllumazine synthase (ribH) from Bacillus subtilis (strain 168).